Here is a 461-residue protein sequence, read N- to C-terminus: Cysteine--tRNA ligase (461 aa).

Cys30 is a Zn(2+) binding site. The short motif at 32 to 42 (PTVYSYAHIGN) is the 'HIGH' region element. Positions 212, 237, and 241 each coordinate Zn(2+). The 'KMSKS' region motif lies at 270-274 (KMSKS). Lys273 contributes to the ATP binding site.

This sequence belongs to the class-I aminoacyl-tRNA synthetase family. Monomer. Requires Zn(2+) as cofactor.

It is found in the cytoplasm. The enzyme catalyses tRNA(Cys) + L-cysteine + ATP = L-cysteinyl-tRNA(Cys) + AMP + diphosphate. This Maricaulis maris (strain MCS10) (Caulobacter maris) protein is Cysteine--tRNA ligase.